The following is a 327-amino-acid chain: uncharacterized protein (327 aa).

The segment at 129–306 is disordered; sequence TPLQNQEATT…DNKKTVTTSS (178 aa). Over residues 130 to 144 the composition is skewed to polar residues; it reads PLQNQEATTSPTIES. Basic and acidic residues-rich tracts occupy residues 184 to 196 and 233 to 276; these read KSVE…DRNV and TKDE…EKIV.

This is an uncharacterized protein from Caenorhabditis elegans.